A 688-amino-acid chain; its full sequence is MTRKTFTLFDPTLALPAIADAFRKLNPAVQWRNPVMFVVYVGSILTTILWVQALGGQGEAPAGFILAITIWLWFTVLFANFAEALAEGRSKAQAASLRGLKKETWAKKLAEPRFGAQWQMTPAADLRKGDVIVVQAQETIPADGEVIEGVASVDESAITGESAPVIRESGGDFSAVTGGTRVLSDWIVVRVTVNPGETFVDRMIAMVENAKRQKTPNEIALTILLVALTIVFLGVIVTLLPFSMFSVEVAGAGTPISITVLIALLVCLIPTTIAGLLSAIGVAGMSRMMQANVIATSGRAVEAAGDVDVLLMDKTGTITLGNRQASVFLPADGVSEAELADAAQLASLADETPEGRSIVVLAKQRFQLRERDIHALDAHFVHFSAHTRMSGVDMAGRQVRKGAADAIRKHVEALGGKFPASVSGYVDEVARRGSTPLVVADGTRVMGVIELKDIVKGGIKERFAELRKMGIKTVMVTGDNRVTAAAIAAEAGVDDFLSEATPEAKLALIRKYQAEGRLVAMTGDGTNDAPALAQADVAVAMNTGTQAAKEAGNMVDLDSNPTKLIEVVETGKQMLMTRGSLTTFSIANDIAKYFAIIPAAFVTTYPQLAALNVMGLASPASAILSAVIFNALIIVFLIPLALKGVKYRPLGAATLLRQNLAIYGLGGVIVPFIGIKLIDLAIAAVGLA.

4 consecutive transmembrane segments (helical) span residues 35–55, 62–82, 219–239, and 260–280; these read VMFV…QALG, AGFI…ANFA, IALT…IVTL, and VLIA…LSAI. Catalysis depends on Asp313, which acts as the 4-aspartylphosphate intermediate. ATP contacts are provided by residues Asp350, Glu354, 383-390, and Lys401; that span reads FSAHTRMS. Mg(2+) is bound by residues Asp524 and Asp528. Helical transmembrane passes span 594–614, 622–642, and 668–688; these read FAII…LNVM, AILS…PLAL, and VIVP…VGLA.

This sequence belongs to the cation transport ATPase (P-type) (TC 3.A.3) family. Type IA subfamily. The system is composed of three essential subunits: KdpA, KdpB and KdpC.

It is found in the cell inner membrane. It catalyses the reaction K(+)(out) + ATP + H2O = K(+)(in) + ADP + phosphate + H(+). Part of the high-affinity ATP-driven potassium transport (or Kdp) system, which catalyzes the hydrolysis of ATP coupled with the electrogenic transport of potassium into the cytoplasm. This subunit is responsible for energy coupling to the transport system and for the release of the potassium ions to the cytoplasm. The chain is Potassium-transporting ATPase ATP-binding subunit from Dechloromonas aromatica (strain RCB).